Consider the following 464-residue polypeptide: Aspartyl protease AED1 (464 aa).

An N-terminal signal peptide occupies residues 1 to 25; sequence MSIMRNFLSMIIMLCVCLNWCFAEG. In terms of domain architecture, Peptidase A1 spans 132–460; it reads YIVTIGIGTP…DVAGGRVGFA (329 aa). Active-site residues include Asp-150 and Asp-345. Cys-384 and Cys-425 form a disulfide bridge.

The protein belongs to the peptidase A1 family.

The protein resides in the secreted. Its subcellular location is the extracellular space. The protein localises to the apoplast. Functionally, aspartyl protease involved in a homeostatic feedback mechanism regulating systemic immunity. Has only mild or no influence on local defenses. Acts downstream of salicylic acid to suppress systemic immunity. In Arabidopsis thaliana (Mouse-ear cress), this protein is Aspartyl protease AED1.